Reading from the N-terminus, the 657-residue chain is Folic acid synthesis protein FOL1 (657 aa).

Residues 1 to 116 (MDKIIIKDLL…WPGVQIERTL (116 aa)) are DHNA. The segment at 149–274 (YLAFGSNLGD…FVLLPLSDIA (126 aa)) is HPPK. The Pterin-binding domain maps to 333–641 (TFIMGILNVT…DIPEIRDAML (309 aa)). The segment at 335–657 (IMGILNVTPD…KPQRRYQIQK (323 aa)) is DHPS. Asn-340 contributes to the Mg(2+) binding site. The (7,8-dihydropterin-6-yl)methyl diphosphate site is built by Thr-380, Asp-416, and Asn-435. The interval 466–524 (LNNSNDSNSNSSINTNGEDNNNNNNNNNNNNNNNNNNNNNNNNNDDNDNDNRSKIKQKI) is disordered. A compositionally biased stretch (low complexity) spans 467 to 509 (NNSNDSNSNSSINTNGEDNNNNNNNNNNNNNNNNNNNNNNNNN). Over residues 514–524 (NDNRSKIKQKI) the composition is skewed to basic and acidic residues. (7,8-dihydropterin-6-yl)methyl diphosphate is bound by residues Asp-547, Lys-583, and 629–631 (RIH).

The protein in the N-terminal section; belongs to the DHNA family. In the central section; belongs to the HPPK family. It in the C-terminal section; belongs to the DHPS family. It depends on Mg(2+) as a cofactor.

It catalyses the reaction 7,8-dihydroneopterin = 6-hydroxymethyl-7,8-dihydropterin + glycolaldehyde. It carries out the reaction 6-hydroxymethyl-7,8-dihydropterin + ATP = (7,8-dihydropterin-6-yl)methyl diphosphate + AMP + H(+). The enzyme catalyses (7,8-dihydropterin-6-yl)methyl diphosphate + 4-aminobenzoate = 7,8-dihydropteroate + diphosphate. It functions in the pathway cofactor biosynthesis; tetrahydrofolate biosynthesis; 2-amino-4-hydroxy-6-hydroxymethyl-7,8-dihydropteridine diphosphate from 7,8-dihydroneopterin triphosphate: step 3/4. It participates in cofactor biosynthesis; tetrahydrofolate biosynthesis; 2-amino-4-hydroxy-6-hydroxymethyl-7,8-dihydropteridine diphosphate from 7,8-dihydroneopterin triphosphate: step 4/4. The protein operates within cofactor biosynthesis; tetrahydrofolate biosynthesis; 7,8-dihydrofolate from 2-amino-4-hydroxy-6-hydroxymethyl-7,8-dihydropteridine diphosphate and 4-aminobenzoate: step 1/2. Functionally, catalyzes three sequential steps of tetrahydrofolate biosynthesis. This chain is Folic acid synthesis protein FOL1 (fol1), found in Dictyostelium discoideum (Social amoeba).